Consider the following 315-residue polypeptide: HTH-type transcriptional regulator TreR (315 aa).

In terms of domain architecture, HTH lacI-type spans 5–59 (LTIKDIARLSGVGKSTVSRVLNNESGVSQLTRERVEAVMNQHGFSPSRSARAMRG). Residues 7–26 (IKDIARLSGVGKSTVSRVLN) constitute a DNA-binding region (H-T-H motif). Alpha,alpha-trehalose 6-phosphate is bound by residues 71-77 (RLDSLSE), glycine 126, arginine 147, 187-190 (DVTT), arginine 194, threonine 242, and tyrosine 284.

As to quaternary structure, homodimer.

In terms of biological role, repressor of the treBC operon. It is able to bind trehalose-6-phosphate and trehalose. The sequence is that of HTH-type transcriptional regulator TreR (treR) from Escherichia coli (strain K12).